A 231-amino-acid chain; its full sequence is MTTPHSPKTIDELMSRANDMAGLTLGQLADSHGFITPANLKRDKGWVGQLIEHELGALAGSRPEPDFLHLGIELKTIPVDKNGKPIETTYVTVAPLIDIQGLTWETSVVCHKLQTVLWIPIQGDRDIPVSQRQIGSPILWRPNEEELALLKQDWEEIMEFIALGQVKQLTARHGEVLQLRPKGANSRSVTQSIGPNGSTQMTNPRGFYLKIPFTQSILSRAFGIYTQATSR.

The protein belongs to the MutH family.

The protein resides in the cytoplasm. Functionally, sequence-specific endonuclease that cleaves unmethylated GATC sequences. It is involved in DNA mismatch repair. The chain is DNA mismatch repair protein MutH from Shewanella woodyi (strain ATCC 51908 / MS32).